A 719-amino-acid polypeptide reads, in one-letter code: MNKPTILRLIKYLSISFLSLVIAAIVLGGGVFFYYVSKAPSLSESKLVATTSSKIYDNKNQLIADLGSERRVNAQANDIPTDLVKAIVSIEDHRFFDHRGIDTIRILGAFLRNLQSNSLQGGSALTQQLIKLTYFSTSTSDQTISRKAQEAWLAIQLEQKATKQEILTYYINKVYMSNGNYGMQTAAQNYYGKDLNNLSLPQLALLAGMPQAPNQYDPYSHPEAAQDRRNLVLSEMKNQGYISAEQYEKAVNTPITDGLQSLKSASNYPAYMDNYLKEVINQVEEETGYNLLTTGMDVYTNVDQEAQKHLWDIYNTDEYVAYPDDELQVASTIVDVSNGKVIAQLGARHQSSNVSFGINQAVETNRDWGSTMKPITDYAPALEYGVYESTATIVHDEPYNYPGTNTPVYNWDRGYFGNITLQYALQQSRNVPAVETLNKVGLNRAKTFLNGLGIDYPSIHYSNAISSNTTESDKKYGASSEKMAAAYAAFANGGTYYKPMYIHKVVFSDGSEKEFSNVGTRAMKETTAYMMTDMMKTVLSYGTGRNAYLAWLPQAGKTGTSNYTDEEIENHIKTSQFVAPDELFAGYTRKYSMAVWTGYSNRLTPLVGNGLTVAAKVYRSMMTYLSEGSNPEDWNIPEGLYRNGEFVFKNGARSTWSSPAPQQPPSTESSSSSSDSSTSQSSSTTPSTNNSTTTNPNNNTQQSNTTPDQQNQNPQPAQP.

Positions 62–223 are transglycosylase; it reads LIADLGSERR…NQYDPYSHPE (162 aa). The Proton donor; for transglycosylase activity role is filled by Glu91. The interval 297–611 is transpeptidase; it reads DVYTNVDQEA…RLTPLVGNGL (315 aa). Residue Ser370 is the Acyl-ester intermediate; for transpeptidase activity of the active site. The segment at 652-719 is disordered; sequence ARSTWSSPAP…QNQNPQPAQP (68 aa). Over residues 654-719 the composition is skewed to low complexity; sequence STWSSPAPQQ…QNQNPQPAQP (66 aa).

The protein in the N-terminal section; belongs to the glycosyltransferase 51 family. In the C-terminal section; belongs to the transpeptidase family. As to quaternary structure, interacts with MreC in the elongasome.

It localises to the secreted. The catalysed reaction is [GlcNAc-(1-&gt;4)-Mur2Ac(oyl-L-Ala-gamma-D-Glu-L-Lys-D-Ala-D-Ala)](n)-di-trans,octa-cis-undecaprenyl diphosphate + beta-D-GlcNAc-(1-&gt;4)-Mur2Ac(oyl-L-Ala-gamma-D-Glu-L-Lys-D-Ala-D-Ala)-di-trans,octa-cis-undecaprenyl diphosphate = [GlcNAc-(1-&gt;4)-Mur2Ac(oyl-L-Ala-gamma-D-Glu-L-Lys-D-Ala-D-Ala)](n+1)-di-trans,octa-cis-undecaprenyl diphosphate + di-trans,octa-cis-undecaprenyl diphosphate + H(+). The enzyme catalyses Preferential cleavage: (Ac)2-L-Lys-D-Ala-|-D-Ala. Also transpeptidation of peptidyl-alanyl moieties that are N-acyl substituents of D-alanine.. The protein operates within cell wall biogenesis; peptidoglycan biosynthesis. Its function is as follows. Cell wall formation. This chain is Penicillin-binding protein 1A (pbpA), found in Streptococcus pneumoniae (strain ATCC BAA-255 / R6).